Consider the following 604-residue polypeptide: Prostaglandin G/H synthase 2 (604 aa).

A signal peptide spans 1–17 (MLARALLLCAALALGQA). Positions 18-55 (ANPCCSNPCQNRGECLSVGFDRYKCDCTRTGYYGENCT) constitute an EGF-like domain. 4 disulfide bridges follow: C21/C32, C22/C145, C26/C42, and C44/C54. N53 carries N-linked (GlcNAc...) asparagine glycosylation. R106 is a substrate binding site. An N-linked (GlcNAc...) asparagine glycan is attached at N130. The active-site Proton acceptor is H193. Y341 is a binding site for substrate. Y371 (for cyclooxygenase activity) is an active-site residue. H374 is a binding site for heme b. N-linked (GlcNAc...) asparagine glycosylation is present at N396. Position 526 is an S-nitrosocysteine (C526). C555 and C561 are joined by a disulfide. N-linked (GlcNAc...) asparagine glycosylation is present at N580.

It belongs to the prostaglandin G/H synthase family. As to quaternary structure, homodimer. Requires heme b as cofactor. In terms of processing, S-nitrosylation by NOS2 (iNOS) activates enzyme activity. S-nitrosylation may take place on different Cys residues in addition to Cys-526.

It localises to the microsome membrane. The protein localises to the endoplasmic reticulum membrane. The protein resides in the nucleus inner membrane. It is found in the nucleus outer membrane. The catalysed reaction is (5Z,8Z,11Z,14Z)-eicosatetraenoate + AH2 + 2 O2 = prostaglandin H2 + A + H2O. It carries out the reaction (5Z,8Z,11Z,14Z)-eicosatetraenoate + 2 O2 = prostaglandin G2. The enzyme catalyses prostaglandin G2 + AH2 = prostaglandin H2 + A + H2O. It catalyses the reaction (5Z,8Z,11Z,14Z,17Z)-eicosapentaenoate + 2 O2 = prostaglandin G3. The catalysed reaction is prostaglandin G3 + AH2 = prostaglandin H3 + A + H2O. It carries out the reaction (8Z,11Z,14Z)-eicosatrienoate + 2 O2 = prostaglandin G1. The enzyme catalyses prostaglandin G1 + AH2 = prostaglandin H1 + A + H2O. It catalyses the reaction 2-(5Z,8Z,11Z,14Z)-eicosatetraenoyl-sn-glycero-3-phosphoethanolamine + 2 O2 = 2-(prostaglandin G2)-sn-glycero-3-phosphoethanolamine. The catalysed reaction is 2-(prostaglandin G2)-sn-glycero-3-phosphoethanolamine + AH2 = 2-(prostaglandin H2)-sn-glycero-3-phosphoethanolamine + A + H2O. It carries out the reaction 2-(5Z,8Z,11Z,14Z)-eicosatetraenoyl-sn-glycero-3-phosphocholine + 2 O2 = 2-(prostaglandin G2)-sn-glycero-3-phosphocholine. The enzyme catalyses 2-(prostaglandin G2)-sn-glycero-3-phosphocholine + AH2 = 2-(prostaglandin H2)-sn-glycero-3-phosphocholine + A + H2O. It catalyses the reaction (15S)-hydroperoxy-(5Z,8Z,11Z,13E)-eicosatetraenoate + AH2 = (15S)-hydroxy-(5Z,8Z,11Z,13E)-eicosatetraenoate + A + H2O. The catalysed reaction is 2-(5Z,8Z,11Z,14Z)-eicosatetraenoyl-sn-glycero-3-phosphocholine + AH2 + O2 = 2-[(15S)-hydroxy-(5Z,8Z,11Z,13E)-eicosatetraenoyl]-sn-glycero-3-phosphocholine + A + H2O. It carries out the reaction 2-(5Z,8Z,11Z,14Z)-eicosatetraenoyl-sn-glycero-3-phosphocholine + AH2 + O2 = 2-[(15R)-hydroxy-(5Z,8Z,11Z,13E)-eicosatetraenoyl]-sn-glycero-3-phosphocholine + A + H2O. The enzyme catalyses 2-(5Z,8Z,11Z,14Z)-eicosatetraenoyl-sn-glycero-3-phosphocholine + AH2 + O2 = 2-[(11R)-hydroxy-(5Z,8Z,12E,14Z)-eicosatetraenoyl]-sn-glycero-3-phosphocholine + A + H2O. It catalyses the reaction (9Z,12Z)-octadecadienoate + AH2 + O2 = 9-hydroxy-(10E,12Z)-octadecadienoate + A + H2O. The catalysed reaction is (9Z,12Z)-octadecadienoate + AH2 + O2 = 13-hydroxy-(9Z,11E)-octadecadienoate + A + H2O. It carries out the reaction (5Z,8Z,11Z,14Z)-eicosatetraenoate + AH2 + O2 = (15R)-hydroxy-(5Z,8Z,11Z,13E)-eicosatetraenoate + A + H2O. The enzyme catalyses (5Z,8Z,11Z,14Z)-eicosatetraenoate + AH2 + O2 = (11R)-hydroxy-(5Z,8Z,12E,14Z)-eicosatetraenoate + A + H2O. It catalyses the reaction (5Z,8Z,11Z,14Z,17Z)-eicosapentaenoate + AH2 + O2 = (11R)-hydroxy-(5Z,8Z,12E,14Z,17Z)-eicosapentaenoate + A + H2O. The catalysed reaction is (5Z,8Z,11Z,14Z,17Z)-eicosapentaenoate + AH2 + O2 = (18S)-hydroxy-(5Z,8Z,11Z,14Z,16E)-eicosapentaenoate + A + H2O. It carries out the reaction (5Z,8Z,11Z,14Z,17Z)-eicosapentaenoate + AH2 + O2 = (18R)-hydroxy-(5Z,8Z,11Z,14Z,16E)-eicosapentaenoate + A + H2O. The enzyme catalyses (5Z,8Z,11Z,14Z,17Z)-eicosapentaenoate + AH2 + O2 = (15R)-hydroxy-(5Z,8Z,11Z,13E,17Z)-eicosapentaenoate + A + H2O. It catalyses the reaction (5Z,8Z,11Z,14Z,17Z)-eicosapentaenoate + AH2 + O2 = (15S)-hydroxy-(5Z,8Z,11Z,13E,17Z)-eicosapentaenoate + A + H2O. The catalysed reaction is (7Z,10Z,13Z,16Z,19Z)-docosapentaenoate + AH2 + O2 = 13R-hydroxy-(7Z,10Z,14E,16Z,19Z)-docosapentaenoate + A + H2O. It carries out the reaction (4Z,7Z,10Z,13Z,16Z,19Z)-docosahexaenoate + AH2 + O2 = 13-hydroxy-(4Z,7Z,10Z,14E,16Z,19Z)-docosahexaenoate + A + H2O. The enzyme catalyses (5S)-hydroxy-(6E,8Z,11Z,14Z)-eicosatetraenoate + AH2 + O2 = (5S,15R)-dihydroxy-(6E,8Z,11Z,13E)-eicosatetraenoate + A + H2O. It catalyses the reaction (4Z,7Z,10Z,13Z,16Z,19Z)-docosahexaenoate + AH2 + O2 = 17R-hydroxy-(4Z,7Z,10Z,13Z,15E,19Z)-docosahexaenoate + A + H2O. The catalysed reaction is (5S)-hydroxy-(6E,8Z,11Z,14Z)-eicosatetraenoate + AH2 + O2 = (5S,15S)-dihydroxy-(6E,8Z,11Z,13E)-eicosatetraenoate + A + H2O. It carries out the reaction (5S)-hydroxy-(6E,8Z,11Z,14Z)-eicosatetraenoate + AH2 + O2 = (5S,11R)-dihydroxy-(6E,8Z,12E,14Z)-eicosatetraenoate + A + H2O. The enzyme catalyses 2-(5Z,8Z,11Z,14Z-eicosatetraenoyl)-glycerol + 2 O2 = 2-glyceryl-prostaglandin G2. It catalyses the reaction 2-glyceryl-prostaglandin G2 + AH2 = 2-glyceryl-prostaglandin H2 + A + H2O. The catalysed reaction is (5Z,8Z,11Z,14Z)-eicosatetraenoate + O2 = (15R)-hydroperoxy-(5Z,8Z,11Z,13E)-eicosatetraenoate. It carries out the reaction (5Z,8Z,11Z,14Z)-eicosatetraenoate + O2 = 11R-hydroperoxy-(5Z,8Z,12E,14Z)-eicosatetraenoate. The enzyme catalyses (9Z,12Z)-octadecadienoate + AH2 + O2 = (9R)-hydroxy-(10E,12Z)-octadecadienoate + A + H2O. It catalyses the reaction (9Z,12Z)-octadecadienoate + AH2 + O2 = (9S)-hydroxy-(10E,12Z)-octadecadienoate + A + H2O. The catalysed reaction is (9Z,12Z)-octadecadienoate + AH2 + O2 = (13S)-hydroxy-(9Z,11E)-octadecadienoate + A + H2O. It carries out the reaction (9Z,12Z)-octadecadienoate + AH2 + O2 = (13R)-hydroxy-(9Z,11E)-octadecadienoate + A + H2O. The protein operates within lipid metabolism; prostaglandin biosynthesis. Dual cyclooxygenase and peroxidase in the biosynthesis pathway of prostanoids, a class of C20 oxylipins mainly derived from arachidonate ((5Z,8Z,11Z,14Z)-eicosatetraenoate, AA, C20:4(n-6)), with a particular role in the inflammatory response. The cyclooxygenase activity oxygenates AA to the hydroperoxy endoperoxide prostaglandin G2 (PGG2), and the peroxidase activity reduces PGG2 to the hydroxy endoperoxide prostaglandin H2 (PGH2), the precursor of all 2-series prostaglandins and thromboxanes. This complex transformation is initiated by abstraction of hydrogen at carbon 13 (with S-stereochemistry), followed by insertion of molecular O2 to form the endoperoxide bridge between carbon 9 and 11 that defines prostaglandins. The insertion of a second molecule of O2 (bis-oxygenase activity) yields a hydroperoxy group in PGG2 that is then reduced to PGH2 by two electrons. Similarly catalyzes successive cyclooxygenation and peroxidation of dihomo-gamma-linoleate (DGLA, C20:3(n-6)) and eicosapentaenoate (EPA, C20:5(n-3)) to corresponding PGH1 and PGH3, the precursors of 1- and 3-series prostaglandins. In an alternative pathway of prostanoid biosynthesis, converts 2-arachidonoyl lysophopholipids to prostanoid lysophopholipids, which are then hydrolyzed by intracellular phospholipases to release free prostanoids. Metabolizes 2-arachidonoyl glycerol yielding the glyceryl ester of PGH2, a process that can contribute to pain response. Generates lipid mediators from n-3 and n-6 polyunsaturated fatty acids (PUFAs) via a lipoxygenase-type mechanism. Oxygenates PUFAs to hydroperoxy compounds and then reduces them to corresponding alcohols. Plays a role in the generation of resolution phase interaction products (resolvins) during both sterile and infectious inflammation. Metabolizes docosahexaenoate (DHA, C22:6(n-3)) to 17R-HDHA, a precursor of the D-series resolvins (RvDs). As a component of the biosynthetic pathway of E-series resolvins (RvEs), converts eicosapentaenoate (EPA, C20:5(n-3)) primarily to 18S-HEPE that is further metabolized by ALOX5 and LTA4H to generate 18S-RvE1 and 18S-RvE2. In vascular endothelial cells, converts docosapentaenoate (DPA, C22:5(n-3)) to 13R-HDPA, a precursor for 13-series resolvins (RvTs) shown to activate macrophage phagocytosis during bacterial infection. In activated leukocytes, contributes to oxygenation of hydroxyeicosatetraenoates (HETE) to diHETES (5,15-diHETE and 5,11-diHETE). Can also use linoleate (LA, (9Z,12Z)-octadecadienoate, C18:2(n-6)) as substrate and produce hydroxyoctadecadienoates (HODEs) in a regio- and stereospecific manner, being (9R)-HODE ((9R)-hydroxy-(10E,12Z)-octadecadienoate) and (13S)-HODE ((13S)-hydroxy-(9Z,11E)-octadecadienoate) its major products. During neuroinflammation, plays a role in neuronal secretion of specialized preresolving mediators (SPMs) 15R-lipoxin A4 that regulates phagocytic microglia. The chain is Prostaglandin G/H synthase 2 (PTGS2) from Cavia porcellus (Guinea pig).